A 296-amino-acid chain; its full sequence is 4-diphosphocytidyl-2-C-methyl-D-erythritol kinase (296 aa).

Lysine 12 is an active-site residue. 94–104 serves as a coordination point for ATP; that stretch reads PAQAGMGGGSS. Aspartate 136 is an active-site residue.

This sequence belongs to the GHMP kinase family. IspE subfamily.

It carries out the reaction 4-CDP-2-C-methyl-D-erythritol + ATP = 4-CDP-2-C-methyl-D-erythritol 2-phosphate + ADP + H(+). It functions in the pathway isoprenoid biosynthesis; isopentenyl diphosphate biosynthesis via DXP pathway; isopentenyl diphosphate from 1-deoxy-D-xylulose 5-phosphate: step 3/6. Functionally, catalyzes the phosphorylation of the position 2 hydroxy group of 4-diphosphocytidyl-2C-methyl-D-erythritol. The chain is 4-diphosphocytidyl-2-C-methyl-D-erythritol kinase from Variovorax paradoxus (strain S110).